Consider the following 547-residue polypeptide: uncharacterized protein (547 aa).

The Cytoplasmic portion of the chain corresponds to 1–19 (MVRLNHAASYFMPIFCSTR). A helical transmembrane segment spans residues 20–40 (PHIVILSALFSISLFSLFYAS). Residues 41-64 (SELLLHQYDDPLMFKPNSQDYFRT) lie on the Vacuolar side of the membrane. A helical transmembrane segment spans residues 65 to 85 (FLLGLFSPFLYYFLKTFLFNI). Residues 86 to 89 (NQRF) are Cytoplasmic-facing. A helical transmembrane segment spans residues 90 to 110 (LILNLIVDFPINDVFMLLILI). Topologically, residues 111 to 139 (GLAYPQVQDHEGGTIKHKECSWHIIPRQA) are vacuolar. A helical membrane pass occupies residues 140 to 160 (YIFGISWALGEFTICIIGNLF). Over 161-340 (NYQEIADPNI…RFIAFSTAYQ (180 aa)) the chain is Cytoplasmic. Serine 225 carries the post-translational modification Phosphoserine. Positions 237 to 271 (PIKPLRSSSSTYGSIRQQPHENKKQLHVPDNSQDD) are disordered. Over residues 242-253 (RSSSSTYGSIRQ) the composition is skewed to polar residues. A helical membrane pass occupies residues 341–361 (LVTGLLLMILVVGSNIMLTIG). Residues 362–394 (ESLILSMYFVYVRGHEGLFTPVVNYFGSRTISN) lie on the Vacuolar side of the membrane. Residues 395–415 (FILCVIIPFISLNFLINTSIY) form a helical membrane-spanning segment. The Cytoplasmic portion of the chain corresponds to 416-523 (LRRELDDWFN…NWRALARNDS (108 aa)). Residues 524–544 (FVLGVMVSWSLLVFVTGILST) form a helical membrane-spanning segment. Over 545-547 (VYI) the chain is Vacuolar.

The protein localises to the vacuole membrane. This is an uncharacterized protein from Saccharomyces cerevisiae (strain ATCC 204508 / S288c) (Baker's yeast).